A 448-amino-acid chain; its full sequence is Nicotinate phosphoribosyltransferase pncB1 (448 aa).

The interval 1 to 21 (MGPPPAARRREGEPDNQDPAG) is disordered. The residue at position 212 (histidine 212) is a Phosphohistidine. The disordered stretch occupies residues 353–372 (RSSYKESPGGRKEALRRSRA).

Belongs to the NAPRTase family. Transiently phosphorylated on a His residue during the reaction cycle. Phosphorylation strongly increases the affinity for substrates and increases the rate of nicotinate D-ribonucleotide production. Dephosphorylation regenerates the low-affinity form of the enzyme, leading to product release.

It carries out the reaction nicotinate + 5-phospho-alpha-D-ribose 1-diphosphate + ATP + H2O = nicotinate beta-D-ribonucleotide + ADP + phosphate + diphosphate. The protein operates within cofactor biosynthesis; NAD(+) biosynthesis; nicotinate D-ribonucleotide from nicotinate: step 1/1. Its function is as follows. Involved in the Preiss-Handler pathway, which is a recycling route that permits the salvage of free nicotinamide (NM) and nicotinic acid (Na) involved in the NAD biosynthesis. Catalyzes the synthesis of beta-nicotinate D-ribonucleotide from nicotinate and 5-phospho-D-ribose 1-phosphate at the expense of ATP. It is not able to use nicotinamide. PncB1 contributes to basal NAD level. This is Nicotinate phosphoribosyltransferase pncB1 (pncB1) from Mycobacterium tuberculosis (strain CDC 1551 / Oshkosh).